Consider the following 52-residue polypeptide: Metchnikowin (52 aa).

Positions 1–24 are cleaved as a signal peptide; it reads MQLNLGAIFLALLGVMATATSVLA. Positions 25–26 are excised as a propeptide; the sequence is EP. The interval 28 to 52 is disordered; the sequence is RHQGPIFDTRPSPFNPNQPRPGPIY. Positions 40 to 52 are enriched in pro residues; the sequence is PFNPNQPRPGPIY.

Hemolymph (at protein level). Highest expression in fat body.

It is found in the secreted. Its function is as follows. Potent antifungal and antibacterial activity against Gram-positive bacteria. The polypeptide is Metchnikowin (Mtk) (Drosophila melanogaster (Fruit fly)).